A 335-amino-acid polypeptide reads, in one-letter code: MAVVVEEGVVLNHGGEELVDLPPGFRFHPTDEEIITCYLKEKVLNSRFTAVAMGEADLNKCEPWDLPKRAKMGEKEFYFFCQRDRKYPTGMRTNRATESGYWKATGKDKEIFKGKGCLVGMKKTLVFYRGRAPKGEKTNWVMHEYRLEGKYSYYNLPKSARDEWVVCRVFHKNNPSTTTQPMTRIPVEDFTRMDSLENIDHLLDFSSLPPLIDPSFMSQTEQPNFKPINPPTYDISSPIQPHHFNSYQSIFNHQVFGSASGSTYNNNNEMIKMEQSLVSVSQETCLSSDVNANMTTTTEVSSGPVMKQEMGMMGMVNGSKSYEDLCDLRGDLWDF.

In terms of domain architecture, NAC spans 21-172 (LPPGFRFHPT…EWVVCRVFHK (152 aa)). Residues 119-178 (VGMKKTLVFYRGRAPKGEKTNWVMHEYRLEGKYSYYNLPKSARDEWVVCRVFHKNNPSTT) mediate DNA binding.

The protein resides in the nucleus. Its function is as follows. Binds to the promoter regions of genes involved in chlorophyll catabolic processes, such as NYC1, SGR1, SGR2 and PAO. The sequence is that of NAC domain-containing protein 87 from Arabidopsis thaliana (Mouse-ear cress).